The sequence spans 259 residues: Leucine-rich repeat-containing protein 3B (259 aa).

The first 33 residues, 1 to 33 (MNLVDLWLSRSLSMCLLLQSFVLMILCFHSASM), serve as a signal peptide directing secretion. Residues 34–64 (CPKGCLCSSSGGLNVTCSNANLKEIPRDLPP) enclose the LRRNT domain. Asparagine 47 is a glycosylation site (N-linked (GlcNAc...) asparagine). LRR repeat units follow at residues 65–86 (ETVL…IFKD), 89–110 (QLRV…AFKG), and 114–135 (TLQT…AFNN). N-linked (GlcNAc...) asparagine glycosylation is present at asparagine 94. In terms of domain architecture, LRRCT spans 145-197 (NPWHCDCTLQQVLRSMASNHETAHNVICKTSVLDEHAGRPFLNAANDADLCNL). Residues 205 to 225 (AMLVTMFGWFTMVISYVVYYV) form a helical membrane-spanning segment.

It belongs to the LRRC3 family.

It is found in the membrane. The protein is Leucine-rich repeat-containing protein 3B (Lrrc3b) of Mus musculus (Mouse).